Here is a 207-residue protein sequence, read N- to C-terminus: Thiamine-phosphate synthase (207 aa).

4-amino-2-methyl-5-(diphosphooxymethyl)pyrimidine-binding positions include 35–39 (QYRDK) and Asn-67. Residues Asp-68 and Asp-86 each contribute to the Mg(2+) site. Thr-105 lines the 4-amino-2-methyl-5-(diphosphooxymethyl)pyrimidine pocket. Residue 132-134 (SNT) coordinates 2-[(2R,5Z)-2-carboxy-4-methylthiazol-5(2H)-ylidene]ethyl phosphate. Lys-135 contributes to the 4-amino-2-methyl-5-(diphosphooxymethyl)pyrimidine binding site. A 2-[(2R,5Z)-2-carboxy-4-methylthiazol-5(2H)-ylidene]ethyl phosphate-binding site is contributed by Gly-162.

The protein belongs to the thiamine-phosphate synthase family. Requires Mg(2+) as cofactor.

It catalyses the reaction 2-[(2R,5Z)-2-carboxy-4-methylthiazol-5(2H)-ylidene]ethyl phosphate + 4-amino-2-methyl-5-(diphosphooxymethyl)pyrimidine + 2 H(+) = thiamine phosphate + CO2 + diphosphate. The enzyme catalyses 2-(2-carboxy-4-methylthiazol-5-yl)ethyl phosphate + 4-amino-2-methyl-5-(diphosphooxymethyl)pyrimidine + 2 H(+) = thiamine phosphate + CO2 + diphosphate. It carries out the reaction 4-methyl-5-(2-phosphooxyethyl)-thiazole + 4-amino-2-methyl-5-(diphosphooxymethyl)pyrimidine + H(+) = thiamine phosphate + diphosphate. The protein operates within cofactor biosynthesis; thiamine diphosphate biosynthesis; thiamine phosphate from 4-amino-2-methyl-5-diphosphomethylpyrimidine and 4-methyl-5-(2-phosphoethyl)-thiazole: step 1/1. Condenses 4-methyl-5-(beta-hydroxyethyl)thiazole monophosphate (THZ-P) and 2-methyl-4-amino-5-hydroxymethyl pyrimidine pyrophosphate (HMP-PP) to form thiamine monophosphate (TMP). The sequence is that of Thiamine-phosphate synthase from Pseudomonas fluorescens (strain Pf0-1).